We begin with the raw amino-acid sequence, 195 residues long: ATP-dependent Clp protease proteolytic subunit (195 aa).

Catalysis depends on serine 99, which acts as the Nucleophile. Residue histidine 124 is part of the active site.

This sequence belongs to the peptidase S14 family. In terms of assembly, fourteen ClpP subunits assemble into 2 heptameric rings which stack back to back to give a disk-like structure with a central cavity, resembling the structure of eukaryotic proteasomes.

The protein localises to the cytoplasm. The catalysed reaction is Hydrolysis of proteins to small peptides in the presence of ATP and magnesium. alpha-casein is the usual test substrate. In the absence of ATP, only oligopeptides shorter than five residues are hydrolyzed (such as succinyl-Leu-Tyr-|-NHMec, and Leu-Tyr-Leu-|-Tyr-Trp, in which cleavage of the -Tyr-|-Leu- and -Tyr-|-Trp bonds also occurs).. Its function is as follows. Cleaves peptides in various proteins in a process that requires ATP hydrolysis. Has a chymotrypsin-like activity. Plays a major role in the degradation of misfolded proteins. The polypeptide is ATP-dependent Clp protease proteolytic subunit (Caldicellulosiruptor saccharolyticus (strain ATCC 43494 / DSM 8903 / Tp8T 6331)).